The following is a 270-amino-acid chain: Phosphoserine phosphatase (270 aa).

Catalysis depends on aspartate 67, which acts as the Nucleophile. Residues aspartate 67 and aspartate 69 each contribute to the Mg(2+) site. Residue aspartate 69 is the Proton donor of the active site. Residues glutamate 76, arginine 112, 156 to 157 (SG), and lysine 205 contribute to the substrate site. Aspartate 227 is a Mg(2+) binding site.

It belongs to the HAD-like hydrolase superfamily. SerB family. The cofactor is Mg(2+).

It carries out the reaction O-phospho-L-serine + H2O = L-serine + phosphate. It catalyses the reaction O-phospho-D-serine + H2O = D-serine + phosphate. Its pathway is amino-acid biosynthesis; L-serine biosynthesis; L-serine from 3-phospho-D-glycerate: step 3/3. In terms of biological role, catalyzes the last step in the biosynthesis of serine from carbohydrates. The reaction mechanism proceeds via the formation of a phosphoryl-enzyme intermediates. The polypeptide is Phosphoserine phosphatase (aay) (Drosophila melanogaster (Fruit fly)).